We begin with the raw amino-acid sequence, 339 residues long: Ketol-acid reductoisomerase (NADP(+)) (339 aa).

In terms of domain architecture, KARI N-terminal Rossmann spans 1-182 (MKVYYDSDAD…GGGRSGVIET (182 aa)). NADP(+)-binding positions include 24–27 (YGSQ), Arg-48, Ser-51, Ser-53, and 83–86 (DEHQ). Residue His-108 is part of the active site. Residue Gly-134 participates in NADP(+) binding. The KARI C-terminal knotted domain occupies 183 to 328 (TFREEVETDL…ARLRKMMPWI (146 aa)). Mg(2+) contacts are provided by Asp-191, Glu-195, Glu-227, and Glu-231. Ser-252 provides a ligand contact to substrate.

The protein belongs to the ketol-acid reductoisomerase family. It depends on Mg(2+) as a cofactor.

The enzyme catalyses (2R)-2,3-dihydroxy-3-methylbutanoate + NADP(+) = (2S)-2-acetolactate + NADPH + H(+). It carries out the reaction (2R,3R)-2,3-dihydroxy-3-methylpentanoate + NADP(+) = (S)-2-ethyl-2-hydroxy-3-oxobutanoate + NADPH + H(+). Its pathway is amino-acid biosynthesis; L-isoleucine biosynthesis; L-isoleucine from 2-oxobutanoate: step 2/4. The protein operates within amino-acid biosynthesis; L-valine biosynthesis; L-valine from pyruvate: step 2/4. Involved in the biosynthesis of branched-chain amino acids (BCAA). Catalyzes an alkyl-migration followed by a ketol-acid reduction of (S)-2-acetolactate (S2AL) to yield (R)-2,3-dihydroxy-isovalerate. In the isomerase reaction, S2AL is rearranged via a Mg-dependent methyl migration to produce 3-hydroxy-3-methyl-2-ketobutyrate (HMKB). In the reductase reaction, this 2-ketoacid undergoes a metal-dependent reduction by NADPH to yield (R)-2,3-dihydroxy-isovalerate. This Zymomonas mobilis subsp. mobilis (strain ATCC 31821 / ZM4 / CP4) protein is Ketol-acid reductoisomerase (NADP(+)).